The sequence spans 499 residues: MTVATGEPADEAAALPGHPQDTYDPEADHECCERVVTNISGLRFETQLKTLAQFPETLLGDPKKRMRFFDPLRNEIFFVRNRPSFDAILYYYQSGGRLRRPVNVPLDIFSEEIRFYELGEEAMEMFREDEGYIKEEERPLPENEFQRQVWLLFEYPESSGPARIIAIVSVMVILISIVSFCLETLPIFRDENEDMHGGGVTFHTYSNSTIGYQQSTSFTDPFFIVETLCIIWFSFEFLVRFFACPSKAGFFTNIMNIIDIVAIIPYFITLGTELAEKPEDAQQGQQAMSLAILRVIRLVRVFRIFKLSRHSKGLQILGQTLKASMRELGLLIFFLFIGVILFSSAVYFAEADERESQFPSIPDAFWWAVVSMTTVGYGDMVPTTIGGKIVGSLCAIAGVLTIALPVPVIVSNFNYFYHRETEGEEQAQYLQVTSCPKIPSSPDLKKSRSASTISKSDYMEIQEGVNNSNEDFREENLKTANCTLANTNYVNITKMLTDV.

A disordered region spans residues 1–27; that stretch reads MTVATGEPADEAAALPGHPQDTYDPEA. The segment at 1–125 is tetramerization domain; the sequence is MTVATGEPAD…YELGEEAMEM (125 aa). Residues 1-160 are Cytoplasmic-facing; that stretch reads MTVATGEPAD…LLFEYPESSG (160 aa). The helical transmembrane segment at 161-182 threads the bilayer; that stretch reads PARIIAIVSVMVILISIVSFCL. At 183-221 the chain is on the extracellular side; sequence ETLPIFRDENEDMHGGGVTFHTYSNSTIGYQQSTSFTDP. N-linked (GlcNAc...) asparagine glycosylation occurs at Asn207. A helical transmembrane segment spans residues 222–243; that stretch reads FFIVETLCIIWFSFEFLVRFFA. Residue Cys244 is the site of S-palmitoyl cysteine attachment. Residues 244–254 are Cytoplasmic-facing; the sequence is CPSKAGFFTNI. The chain crosses the membrane as a helical span at residues 255–275; that stretch reads MNIIDIVAIIPYFITLGTELA. The Extracellular portion of the chain corresponds to 276-289; the sequence is EKPEDAQQGQQAMS. Residues 290-310 form a helical; Voltage-sensor membrane-spanning segment; it reads LAILRVIRLVRVFRIFKLSRH. The Cytoplasmic portion of the chain corresponds to 311-325; the sequence is SKGLQILGQTLKASM. Residues 312–325 are S4-S5 linker; it reads KGLQILGQTLKASM. Residues 326–347 form a helical membrane-spanning segment; the sequence is RELGLLIFFLFIGVILFSSAVY. The Extracellular segment spans residues 348 to 361; sequence FAEADERESQFPSI. Positions 362–373 form an intramembrane region, helical; it reads PDAFWWAVVSMT. Positions 374–379 match the Selectivity filter motif; sequence TVGYGD. Residues 374–381 lie within the membrane without spanning it; sequence TVGYGDMV. Over 382-388 the chain is Extracellular; sequence PTTIGGK. A helical membrane pass occupies residues 389 to 417; sequence IVGSLCAIAGVLTIALPVPVIVSNFNYFY. At 418-499 the chain is on the cytoplasmic side; sequence HRETEGEEQA…VNITKMLTDV (82 aa). Residue Tyr429 is modified to Phosphotyrosine. 4 positions are modified to phosphoserine: Ser434, Ser440, Ser441, and Ser449. A Phosphotyrosine modification is found at Tyr458. Position 468 is a phosphoserine (Ser468). The PDZ-binding motif lies at 497–499; that stretch reads TDV.

Belongs to the potassium channel family. A (Shaker) (TC 1.A.1.2) subfamily. Kv1.2/KCNA2 sub-subfamily. Homotetramer and heterotetramer with other channel-forming alpha subunits, such as KCNA1, KCNA4, KCNA5, KCNA6 and KCNA7. Channel activity is regulated by interaction with the beta subunits, including KCNAB1 and KCNAB2. Identified in a complex with KCNA1 and KCNAB2. Identified in a complex with KCNA5 and KCNAB1. Interacts with the beta subunit KCNAB1. Identified in a complex with KCNA4 and FYN. Interacts with PTK2B. Interacts (via C-terminus) with CTTN. Interacts (via N-terminal cytoplasmic domain) with RHOA (GTP-bound form); this regulates channel activity by reducing location at the cell surface in response to CHRM1 activation. Interacts with DRD2. Interacts with SIGMAR1; cocaine consumption leads to increased interaction. Interacts with ADAM22. Interacts with CNTNAP2. Interacts (via C-terminus) with the PDZ domains of DLG1, DLG2 and DLG4. Interacts with ADAM11. Interacts with LYNX1. Post-translationally, phosphorylated on tyrosine residues; phosphorylation increases in response to ischemia. Phosphorylated on tyrosine residues by activated PTK2B/PYK2. Phosphorylation on tyrosine residues suppresses ion channel activity. Phosphorylated on tyrosine residues in response to CHRM1 activation; this abolishes interaction with CTTN. This is probably due to endocytosis of the phosphorylated channel subunits. Phosphorylated on serine residues in response to increased cAMP levels; phosphorylation is apparently not catalyzed by PKA. In terms of processing, N-glycosylated, with complex, sialylated N-glycans. Expressed in a wide variety of gastrointestinal smooth muscles. Not expressed in portal vein, renal artery, and uterus.

It localises to the cell membrane. The protein resides in the membrane. Its subcellular location is the cell projection. The protein localises to the axon. It is found in the synapse. It localises to the presynaptic cell membrane. The protein resides in the synaptosome. Its subcellular location is the endoplasmic reticulum membrane. The protein localises to the dendrite. It is found in the lamellipodium membrane. It localises to the cell junction. The protein resides in the paranodal septate junction. It catalyses the reaction K(+)(in) = K(+)(out). With respect to regulation, inhibited by 4-aminopyridine (4-AP). Inhibited by dendrotoxin (DTX) and charybdotoxin (CTX), but not by tetraethylammonium (TEA). Inhibited by tityustoxin-K alpha (TsTX-Kalpha), a toxin that is highly specific for KCNA2. Inhibited by maurotoxin. Inhibited by kappaM conotoxins kappaM-RIIIJ and kappaM-RIIIK. In terms of biological role, voltage-gated potassium channel that mediates transmembrane potassium transport in excitable membranes, primarily in the brain and the central nervous system, but also in the cardiovascular system. Prevents aberrant action potential firing and regulates neuronal output. Forms tetrameric potassium-selective channels through which potassium ions pass in accordance with their electrochemical gradient. The channel alternates between opened and closed conformations in response to the voltage difference across the membrane. Can form functional homotetrameric channels and heterotetrameric channels that contain variable proportions of KCNA1, KCNA2, KCNA4, KCNA5, KCNA6, KCNA7, and possibly other family members as well; channel properties depend on the type of alpha subunits that are part of the channel. Channel properties are modulated by cytoplasmic beta subunits that regulate the subcellular location of the alpha subunits and promote rapid inactivation of delayed rectifier potassium channels. In vivo, membranes probably contain a mixture of heteromeric potassium channel complexes, making it difficult to assign currents observed in intact tissues to any particular potassium channel family member. Homotetrameric KCNA2 forms a delayed-rectifier potassium channel that opens in response to membrane depolarization, followed by slow spontaneous channel closure. In contrast, a heteromultimer formed by KCNA2 and KCNA4 shows rapid inactivation. Regulates neuronal excitability and plays a role as pacemaker in the regulation of neuronal action potentials. KCNA2-containing channels play a presynaptic role and prevent hyperexcitability and aberrant action potential firing. Response to toxins that are selective for KCNA2-containing potassium channels suggests that in Purkinje cells, dendritic subthreshold KCNA2-containing potassium channels prevent random spontaneous calcium spikes, suppressing dendritic hyperexcitability without hindering the generation of somatic action potentials, and thereby play an important role in motor coordination. Plays a role in the induction of long-term potentiation of neuron excitability in the CA3 layer of the hippocampus. May function as down-stream effector for G protein-coupled receptors and inhibit GABAergic inputs to basolateral amygdala neurons. May contribute to the regulation of neurotransmitter release, such as gamma-aminobutyric acid (GABA). Contributes to the regulation of the axonal release of the neurotransmitter dopamine. Reduced KCNA2 expression plays a role in the perception of neuropathic pain after peripheral nerve injury, but not acute pain. Plays a role in the regulation of the time spent in non-rapid eye movement (NREM) sleep. The polypeptide is Potassium voltage-gated channel subfamily A member 2 (KCNA2) (Canis lupus familiaris (Dog)).